Here is a 416-residue protein sequence, read N- to C-terminus: Tryptophan synthase beta chain (416 aa).

Lys109 carries the post-translational modification N6-(pyridoxal phosphate)lysine.

This sequence belongs to the TrpB family. In terms of assembly, tetramer of two alpha and two beta chains. Requires pyridoxal 5'-phosphate as cofactor.

It catalyses the reaction (1S,2R)-1-C-(indol-3-yl)glycerol 3-phosphate + L-serine = D-glyceraldehyde 3-phosphate + L-tryptophan + H2O. Its pathway is amino-acid biosynthesis; L-tryptophan biosynthesis; L-tryptophan from chorismate: step 5/5. In terms of biological role, the beta subunit is responsible for the synthesis of L-tryptophan from indole and L-serine. In Synechococcus sp. (strain WH7803), this protein is Tryptophan synthase beta chain.